A 361-amino-acid chain; its full sequence is 3-dehydroquinate synthase (361 aa).

NAD(+)-binding positions include 72–77 (SGEKEK), 130–131 (TT), lysine 142, and lysine 151. Glutamate 184, histidine 247, and histidine 264 together coordinate Zn(2+).

Belongs to the sugar phosphate cyclases superfamily. Dehydroquinate synthase family. Co(2+) serves as cofactor. Requires Zn(2+) as cofactor. NAD(+) is required as a cofactor.

Its subcellular location is the cytoplasm. The catalysed reaction is 7-phospho-2-dehydro-3-deoxy-D-arabino-heptonate = 3-dehydroquinate + phosphate. It participates in metabolic intermediate biosynthesis; chorismate biosynthesis; chorismate from D-erythrose 4-phosphate and phosphoenolpyruvate: step 2/7. In terms of biological role, catalyzes the conversion of 3-deoxy-D-arabino-heptulosonate 7-phosphate (DAHP) to dehydroquinate (DHQ). The protein is 3-dehydroquinate synthase of Bacillus cereus (strain G9842).